The chain runs to 323 residues: Chitin-binding lectin 1 (323 aa).

An N-terminal signal peptide occupies residues 1 to 22 (MKETAISVLALLTLFLLEVVSA). Proline 50, proline 51, proline 53, and proline 55 each carry 4-hydroxyproline. 4 O-linked (Ara...) hydroxyproline glycosylation sites follow: proline 50, proline 51, proline 53, and proline 55. Chitin-binding type-1 domains are found at residues 58–101 (YPQC…QCPG) and 105–149 (EGRC…QCKL). Cystine bridges form between cysteine 61–cysteine 77, cysteine 70–cysteine 83, cysteine 76–cysteine 90, cysteine 95–cysteine 99, cysteine 108–cysteine 125, cysteine 117–cysteine 131, cysteine 124–cysteine 138, and cysteine 143–cysteine 147. Chitin is bound by residues serine 78, tryptophan 80, tryptophan 82, and tyrosine 89. The extensin-like stretch occupies residues 150 to 210 (PSPPPPPPPP…PPPPPPALPY (61 aa)). An O-linked (Gal) serine glycan is attached at serine 151. Repeat copies occupy residues 151–159 (SPPPPPPPP), 160–164 (SPPPP), 165–167 (SPP), 168–172 (SPPPP), 173–180 (SPPPPPPP), 181–185 (SPPPP), 186–190 (SPPPP), 191–192 (SP), 193–198 (SPPPPP), and 200–206 (SPPPPPP). A 10 X approximate repeats of S-P-P-P-P region spans residues 151 to 206 (SPPPPPPPPSPPPPSPPSPPPPSPPPPPPPSPPPPSPPPPSPSPPPPPASPPPPPP). 8 positions are modified to 4-hydroxyproline: proline 152, proline 153, proline 154, proline 155, proline 156, proline 157, proline 158, and proline 159. O-linked (Ara...) hydroxyproline glycosylation is found at proline 152, proline 153, proline 154, proline 155, proline 156, proline 157, proline 158, and proline 159. The disordered stretch occupies residues 154–203 (PPPPPPSPPPPSPPSPPPPSPPPPPPPSPPPPSPPPPSPSPPPPPASPPP). An O-linked (Gal) serine glycan is attached at serine 160. 4-hydroxyproline occurs at positions 161, 162, 163, and 164. O-linked (Ara...) hydroxyproline glycosylation is found at proline 161, proline 162, proline 163, and proline 164. Serine 165 carries an O-linked (Gal) serine glycan. 4-hydroxyproline occurs at positions 166 and 167. Proline 166 and proline 167 each carry an O-linked (Ara...) hydroxyproline glycan. The O-linked (Gal) serine glycan is linked to serine 168. 4 positions are modified to 4-hydroxyproline: proline 169, proline 170, proline 171, and proline 172. 4 O-linked (Ara...) hydroxyproline glycosylation sites follow: proline 169, proline 170, proline 171, and proline 172. O-linked (Gal) serine glycosylation is present at serine 173. Residues proline 174, proline 175, proline 176, proline 177, proline 178, proline 179, and proline 180 each carry the 4-hydroxyproline modification. O-linked (Ara...) hydroxyproline glycans are attached at residues proline 174, proline 175, proline 176, proline 177, proline 178, proline 179, and proline 180. A glycan (O-linked (Gal) serine) is linked at serine 181. 4-hydroxyproline occurs at positions 182, 183, 184, and 185. Residues proline 182, proline 183, proline 184, and proline 185 are each glycosylated (O-linked (Ara...) hydroxyproline). A glycan (O-linked (Gal) serine) is linked at serine 186. Proline 187, proline 188, proline 189, and proline 190 each carry 4-hydroxyproline. O-linked (Ara...) hydroxyproline glycans are attached at residues proline 187, proline 188, proline 189, and proline 190. A glycan (O-linked (Gal) serine) is linked at serine 191. At proline 192 the chain carries 4-hydroxyproline. A glycan (O-linked (Ara...) hydroxyproline) is linked at proline 192. Serine 193 carries an O-linked (Gal) serine glycan. 4-hydroxyproline occurs at positions 194, 195, 196, 197, and 198. O-linked (Ara...) hydroxyproline glycans are attached at residues proline 194, proline 195, proline 196, proline 197, and proline 198. O-linked (Gal) serine glycosylation occurs at serine 200. Proline 201, proline 202, proline 203, proline 204, proline 205, proline 206, and proline 209 each carry 4-hydroxyproline. O-linked (Ara...) hydroxyproline glycosylation is found at proline 201, proline 202, proline 203, proline 204, proline 205, proline 206, and proline 209. Chitin-binding type-1 domains lie at 210–253 (YPQC…QCPG) and 257–301 (EGRC…QCNT). 8 cysteine pairs are disulfide-bonded: cysteine 213–cysteine 229, cysteine 222–cysteine 235, cysteine 228–cysteine 242, cysteine 247–cysteine 251, cysteine 260–cysteine 277, cysteine 269–cysteine 283, cysteine 276–cysteine 290, and cysteine 295–cysteine 299. Chitin contacts are provided by serine 230, tryptophan 232, tryptophan 234, and tyrosine 241.

This sequence in the central section; belongs to the extensin family. As to quaternary structure, homodimer. In terms of processing, heavily glycosylated with beta-arabinose on hydroxyprolines and with alpha-galactose on serines of the extensin-like domain. As no other sugars could be detected in the native lectin, it is unlikely that the three putative N-glycosylation sites are actually glycosylated. The N-terminus is blocked. The N-terminal sequences proposed in PubMed:9022287 and PubMed:11056399 originate probably from truncated proteins.

This protein might function as a defense against chitin containing pathogens. Binds to several branched or linear N-acetyllactosamine-containing glycosphingolipids and also to lactosylceramide with sphingosine and non-hydroxy fatty acids. This chain is Chitin-binding lectin 1, found in Solanum tuberosum (Potato).